The following is a 209-amino-acid chain: Large ribosomal subunit protein uL3 (209 aa).

The protein belongs to the universal ribosomal protein uL3 family. In terms of assembly, part of the 50S ribosomal subunit. Forms a cluster with proteins L14 and L19.

Functionally, one of the primary rRNA binding proteins, it binds directly near the 3'-end of the 23S rRNA, where it nucleates assembly of the 50S subunit. The polypeptide is Large ribosomal subunit protein uL3 (Clostridium tetani (strain Massachusetts / E88)).